The sequence spans 596 residues: Aspartate--tRNA(Asp/Asn) ligase (596 aa).

Glu175 is a binding site for L-aspartate. An aspartate region spans residues 199 to 202 (QQYK). Arg221 and His454 together coordinate L-aspartate. 221–223 (RDE) serves as a coordination point for ATP. Glu488 provides a ligand contact to ATP. Arg495 contributes to the L-aspartate binding site. 540–543 (GIDR) provides a ligand contact to ATP.

It belongs to the class-II aminoacyl-tRNA synthetase family. Type 1 subfamily. In terms of assembly, homodimer.

It is found in the cytoplasm. It carries out the reaction tRNA(Asx) + L-aspartate + ATP = L-aspartyl-tRNA(Asx) + AMP + diphosphate. Aspartyl-tRNA synthetase with relaxed tRNA specificity since it is able to aspartylate not only its cognate tRNA(Asp) but also tRNA(Asn). Reaction proceeds in two steps: L-aspartate is first activated by ATP to form Asp-AMP and then transferred to the acceptor end of tRNA(Asp/Asn). The chain is Aspartate--tRNA(Asp/Asn) ligase from Rhizobium leguminosarum bv. trifolii (strain WSM2304).